The sequence spans 582 residues: tRNA(Ile)-lysidine synthase (582 aa).

46–51 lines the ATP pocket; the sequence is SGGADS. A CMP/dCMP-type deaminase domain is found at 402–525; that stretch reads DPLHAAMGEA…DLLADHWGWR (124 aa). The tract at residues 548 to 582 is disordered; that stretch reads VRRRSADTPQTPNAETPAPRSSRSTSASGKPTMLE. Positions 563-575 are enriched in low complexity; that stretch reads TPAPRSSRSTSAS.

The protein belongs to the tRNA(Ile)-lysidine synthase family.

The protein resides in the cytoplasm. The catalysed reaction is cytidine(34) in tRNA(Ile2) + L-lysine + ATP = lysidine(34) in tRNA(Ile2) + AMP + diphosphate + H(+). In terms of biological role, ligates lysine onto the cytidine present at position 34 of the AUA codon-specific tRNA(Ile) that contains the anticodon CAU, in an ATP-dependent manner. Cytidine is converted to lysidine, thus changing the amino acid specificity of the tRNA from methionine to isoleucine. This is tRNA(Ile)-lysidine synthase from Deinococcus radiodurans (strain ATCC 13939 / DSM 20539 / JCM 16871 / CCUG 27074 / LMG 4051 / NBRC 15346 / NCIMB 9279 / VKM B-1422 / R1).